A 439-amino-acid polypeptide reads, in one-letter code: Probable eukaryotic translation initiation factor 5-1 (439 aa).

Position 29-36 (29-36) interacts with GTP; it reads GRGNGIKT. The segment at 143 to 245 is disordered; sequence LKNPPEQKKS…REAAEKRMKE (103 aa). A compositionally biased stretch (basic and acidic residues) spans 147 to 186; sequence PEQKKSSKDKKSMRRAEKERLREGEAADEEMRKLKKEAAS. Residues 214–228 show a composition bias toward acidic residues; that stretch reads DENDQADSEEDDDDV. Phosphothreonine is present on T232. A compositionally biased stretch (basic and acidic residues) spans 234–245; it reads TSREAAEKRMKE. The W2 domain occupies 283–439; sequence KIPENAHEKL…QNAESESEEE (157 aa). 2 positions are modified to phosphoserine: S434 and S436.

The protein belongs to the eIF-2-beta/eIF-5 family.

Catalyzes the hydrolysis of GTP bound to the 40S ribosomal initiation complex (40S.mRNA.Met-tRNA[F].eIF-2.GTP) with the subsequent joining of a 60S ribosomal subunit resulting in the release of eIF-2 and the guanine nucleotide. The subsequent joining of a 60S ribosomal subunit results in the formation of a functional 80S initiation complex (80S.mRNA.Met-tRNA[F]). In Arabidopsis thaliana (Mouse-ear cress), this protein is Probable eukaryotic translation initiation factor 5-1.